The following is a 314-amino-acid chain: Porphobilinogen deaminase (314 aa).

Residue C242 is modified to S-(dipyrrolylmethanemethyl)cysteine.

This sequence belongs to the HMBS family. In terms of assembly, monomer. Dipyrromethane is required as a cofactor.

It carries out the reaction 4 porphobilinogen + H2O = hydroxymethylbilane + 4 NH4(+). Its pathway is porphyrin-containing compound metabolism; protoporphyrin-IX biosynthesis; coproporphyrinogen-III from 5-aminolevulinate: step 2/4. Its function is as follows. Tetrapolymerization of the monopyrrole PBG into the hydroxymethylbilane pre-uroporphyrinogen in several discrete steps. The polypeptide is Porphobilinogen deaminase (hemC) (Bacillus subtilis (strain 168)).